The chain runs to 216 residues: Probable transaldolase (216 aa).

K83 acts as the Schiff-base intermediate with substrate in catalysis.

This sequence belongs to the transaldolase family. Type 3B subfamily.

The protein localises to the cytoplasm. The catalysed reaction is D-sedoheptulose 7-phosphate + D-glyceraldehyde 3-phosphate = D-erythrose 4-phosphate + beta-D-fructose 6-phosphate. It participates in carbohydrate degradation; pentose phosphate pathway; D-glyceraldehyde 3-phosphate and beta-D-fructose 6-phosphate from D-ribose 5-phosphate and D-xylulose 5-phosphate (non-oxidative stage): step 2/3. In terms of biological role, transaldolase is important for the balance of metabolites in the pentose-phosphate pathway. The polypeptide is Probable transaldolase (Shouchella clausii (strain KSM-K16) (Alkalihalobacillus clausii)).